A 507-amino-acid polypeptide reads, in one-letter code: ATP synthase subunit alpha, chloroplastic (507 aa).

Glycine 170–threonine 177 provides a ligand contact to ATP.

It belongs to the ATPase alpha/beta chains family. F-type ATPases have 2 components, CF(1) - the catalytic core - and CF(0) - the membrane proton channel. CF(1) has five subunits: alpha(3), beta(3), gamma(1), delta(1), epsilon(1). CF(0) has four main subunits: a, b, b' and c.

The protein localises to the plastid. It is found in the chloroplast thylakoid membrane. It catalyses the reaction ATP + H2O + 4 H(+)(in) = ADP + phosphate + 5 H(+)(out). Its function is as follows. Produces ATP from ADP in the presence of a proton gradient across the membrane. The alpha chain is a regulatory subunit. The chain is ATP synthase subunit alpha, chloroplastic from Sorghum bicolor (Sorghum).